Consider the following 273-residue polypeptide: Karrikin insensitive 2 receptor B (273 aa).

Catalysis depends on Ser-95, which acts as the Nucleophile. Residue Asp-217 is part of the active site.

The protein belongs to the AB hydrolase superfamily. In terms of tissue distribution, expressed in stigma.

It localises to the nucleus. The protein localises to the cytoplasm. Functionally, may be involved in plant olfaction during volatile communication. In Petunia hybrida (Petunia), this protein is Karrikin insensitive 2 receptor B.